Here is a 323-residue protein sequence, read N- to C-terminus: Ribokinase (323 aa).

Substrate is bound by residues methionine 26–aspartate 28, glycine 54–asparagine 58, and glutamate 155. ATP contacts are provided by residues asparagine 200, threonine 236–glycine 241, and threonine 257. Aspartate 264 and threonine 266 together coordinate K(+). ATP contacts are provided by residues glycine 269–aspartate 270 and asparagine 296. Residue aspartate 270 participates in substrate binding. The active-site Proton acceptor is the aspartate 270. K(+) is bound by residues serine 302, alanine 305, glycine 307, and serine 311.

Belongs to the carbohydrate kinase PfkB family. Ribokinase subfamily. Homodimer. It depends on Mg(2+) as a cofactor.

The protein localises to the cytoplasm. Its subcellular location is the nucleus. It catalyses the reaction D-ribose + ATP = D-ribose 5-phosphate + ADP + H(+). The protein operates within carbohydrate metabolism; D-ribose degradation; D-ribose 5-phosphate from beta-D-ribopyranose: step 2/2. Its activity is regulated as follows. Activated by a monovalent cation that binds near, but not in, the active site. The most likely occupant of the site in vivo is potassium. Ion binding induces a conformational change that may alter substrate affinity. Competitively inhibited by phosphonoacetic acid, etidronate, 2-carboxethylphosphonic acid, N-(phosphonomethyl)glycine, N-(phosphonomethyl)iminodiacetic acid and clodronate. Functionally, catalyzes the phosphorylation of ribose at O-5 in a reaction requiring ATP and magnesium. The resulting D-ribose-5-phosphate can then be used either for sythesis of nucleotides, histidine, and tryptophan, or as a component of the pentose phosphate pathway. The polypeptide is Ribokinase (Mus musculus (Mouse)).